A 305-amino-acid polypeptide reads, in one-letter code: Acyl transferase (305 aa).

Catalysis depends on charge relay system residues Ser114, Asp211, and His241.

It belongs to the LuxD family.

Its pathway is lipid metabolism; fatty acid reduction for biolumincescence. Acyl transferase is part of the fatty acid reductase system required for aldehyde biosynthesis; it produces fatty acids for the luminescent reaction. The protein is Acyl transferase of Vibrio campbellii (strain ATCC BAA-1116).